A 335-amino-acid polypeptide reads, in one-letter code: Adenine deaminase (335 aa).

Positions 14, 16, and 194 each coordinate Zn(2+). The active-site Proton donor is glutamate 197. A Zn(2+)-binding site is contributed by aspartate 275. Aspartate 276 contributes to the substrate binding site.

This sequence belongs to the metallo-dependent hydrolases superfamily. Adenosine and AMP deaminases family. Adenine deaminase type 2 subfamily. Zn(2+) is required as a cofactor.

The catalysed reaction is adenine + H2O + H(+) = hypoxanthine + NH4(+). Its function is as follows. Catalyzes the hydrolytic deamination of adenine to hypoxanthine. Plays an important role in the purine salvage pathway and in nitrogen catabolism. This Chlorobium phaeobacteroides (strain BS1) protein is Adenine deaminase.